Here is a 611-residue protein sequence, read N- to C-terminus: Oligoendopeptidase F homolog (611 aa).

H384 lines the Zn(2+) pocket. The active site involves E385. Zn(2+)-binding residues include H388 and H391.

This sequence belongs to the peptidase M3B family. Requires Zn(2+) as cofactor.

This is Oligoendopeptidase F homolog (pepF) from Mycoplasma pneumoniae (strain ATCC 29342 / M129 / Subtype 1) (Mycoplasmoides pneumoniae).